Reading from the N-terminus, the 675-residue chain is MHHVNKYFNQTMVIEALKMSFYKLNPKQLIKNPIMFVVEVGMLLTLILICFPDIFGTSYLSRGYLITIFIILLITILFANFSEAFAEGRGKAQADSLRQAQSNLTARLIEENGAYRIVNATELKAGQNIRVENGETIPADGVVINGLATVDESAITGESAPVIKESGGDFDGVIGGTLVTSDWLEIRVESEAGTSFLDKMIALVEGAERNKTPNEIALFTLLTTLTIIFLVVIVTLYPIASYLHLILPIAMLIALTVCLIPTTIGGLLSAIGIAGMDRVTQFNVLAKSGRAVEVCGDVDVMILDKTGTITYGNRIASEFLPVNQQMMEKLIVAAYMSSIYDDTPEGKSIVRLAKQMYINELPKDIDGTYKPFTAETRMSGIITNEISVFKGAPNSMINLVKQQQGNIPLNIESICMDVSSKGGTPLIVIENNVMLGVIYLKDVIKDGLVERFAELRKMGIETVMCTGDNALTAATIAKEAGVDRFVAECKPEDKIKVIKDEQAKGHIVAMTGDGTNDAPALAQANIGLAMNSGTISAKEAANLIDLDSNPTKLIEVVKIGKQLLMTRGALTTFSLANDVAKYFAILPALMMSTIPEMTSLNIMHLSSPKSAIISALIFNALIIVALIPIAMKGVKVKGYSIDRIFINNMLIYGLGGLIVPFLGIKLIDMIVQFFV.

Transmembrane regions (helical) follow at residues 34–54 (IMFV…FPDI), 65–85 (LITI…SEAF), 216–236 (IALF…IVTL), and 245–265 (LILP…TTIG). Catalysis depends on Asp304, which acts as the 4-aspartylphosphate intermediate. Residues Asp341, Glu345, 372-379 (FTAETRMS), and Lys390 each bind ATP. 2 residues coordinate Mg(2+): Asp513 and Asp517. The next 3 helical transmembrane spans lie at 569 to 591 (ALTT…ALMM), 611 to 631 (AIIS…PIAM), and 644 to 664 (IFIN…FLGI).

This sequence belongs to the cation transport ATPase (P-type) (TC 3.A.3) family. Type IA subfamily. As to quaternary structure, the system is composed of three essential subunits: KdpA, KdpB and KdpC.

The protein localises to the cell membrane. It catalyses the reaction K(+)(out) + ATP + H2O = K(+)(in) + ADP + phosphate + H(+). In terms of biological role, part of the high-affinity ATP-driven potassium transport (or Kdp) system, which catalyzes the hydrolysis of ATP coupled with the electrogenic transport of potassium into the cytoplasm. This subunit is responsible for energy coupling to the transport system and for the release of the potassium ions to the cytoplasm. This Staphylococcus aureus (strain MRSA252) protein is Potassium-transporting ATPase ATP-binding subunit 2.